The sequence spans 139 residues: Putative pre-16S rRNA nuclease (139 aa).

The protein belongs to the YqgF nuclease family.

The protein localises to the cytoplasm. Could be a nuclease involved in processing of the 5'-end of pre-16S rRNA. This Streptococcus agalactiae serotype Ia (strain ATCC 27591 / A909 / CDC SS700) protein is Putative pre-16S rRNA nuclease.